Reading from the N-terminus, the 155-residue chain is Endoribonuclease YbeY (155 aa).

His117, His121, and His127 together coordinate Zn(2+).

It belongs to the endoribonuclease YbeY family. The cofactor is Zn(2+).

The protein localises to the cytoplasm. In terms of biological role, single strand-specific metallo-endoribonuclease involved in late-stage 70S ribosome quality control and in maturation of the 3' terminus of the 16S rRNA. The chain is Endoribonuclease YbeY from Treponema denticola (strain ATCC 35405 / DSM 14222 / CIP 103919 / JCM 8153 / KCTC 15104).